A 113-amino-acid chain; its full sequence is Putative pterin-4-alpha-carbinolamine dehydratase (113 aa).

It belongs to the pterin-4-alpha-carbinolamine dehydratase family.

The enzyme catalyses (4aS,6R)-4a-hydroxy-L-erythro-5,6,7,8-tetrahydrobiopterin = (6R)-L-erythro-6,7-dihydrobiopterin + H2O. The sequence is that of Putative pterin-4-alpha-carbinolamine dehydratase from Nitrosococcus oceani (strain ATCC 19707 / BCRC 17464 / JCM 30415 / NCIMB 11848 / C-107).